We begin with the raw amino-acid sequence, 125 residues long: Holo-[acyl-carrier-protein] synthase (125 aa).

2 residues coordinate Mg(2+): Asp-8 and Glu-57.

This sequence belongs to the P-Pant transferase superfamily. AcpS family. Mg(2+) serves as cofactor.

The protein localises to the cytoplasm. It catalyses the reaction apo-[ACP] + CoA = holo-[ACP] + adenosine 3',5'-bisphosphate + H(+). In terms of biological role, transfers the 4'-phosphopantetheine moiety from coenzyme A to a Ser of acyl-carrier-protein. This chain is Holo-[acyl-carrier-protein] synthase, found in Blochmanniella floridana.